The primary structure comprises 232 residues: Phosphoribosylformylglycinamidine synthase subunit PurQ (232 aa).

Residues 2–232 enclose the Glutamine amidotransferase type-1 domain; the sequence is KIAIIQFGGT…SMADYITENF (231 aa). Residue Cys86 is the Nucleophile of the active site. Catalysis depends on residues His203 and Glu205.

Part of the FGAM synthase complex composed of 1 PurL, 1 PurQ and 2 PurS subunits.

The protein localises to the cytoplasm. The enzyme catalyses N(2)-formyl-N(1)-(5-phospho-beta-D-ribosyl)glycinamide + L-glutamine + ATP + H2O = 2-formamido-N(1)-(5-O-phospho-beta-D-ribosyl)acetamidine + L-glutamate + ADP + phosphate + H(+). It carries out the reaction L-glutamine + H2O = L-glutamate + NH4(+). The protein operates within purine metabolism; IMP biosynthesis via de novo pathway; 5-amino-1-(5-phospho-D-ribosyl)imidazole from N(2)-formyl-N(1)-(5-phospho-D-ribosyl)glycinamide: step 1/2. Functionally, part of the phosphoribosylformylglycinamidine synthase complex involved in the purines biosynthetic pathway. Catalyzes the ATP-dependent conversion of formylglycinamide ribonucleotide (FGAR) and glutamine to yield formylglycinamidine ribonucleotide (FGAM) and glutamate. The FGAM synthase complex is composed of three subunits. PurQ produces an ammonia molecule by converting glutamine to glutamate. PurL transfers the ammonia molecule to FGAR to form FGAM in an ATP-dependent manner. PurS interacts with PurQ and PurL and is thought to assist in the transfer of the ammonia molecule from PurQ to PurL. This is Phosphoribosylformylglycinamidine synthase subunit PurQ from Methanosarcina acetivorans (strain ATCC 35395 / DSM 2834 / JCM 12185 / C2A).